Here is a 741-residue protein sequence, read N- to C-terminus: Type VI secretion system spike protein VgrG1b (741 aa).

Composition is skewed to polar residues over residues 614 to 629 (SIGA…NETI) and 649 to 663 (GNQS…SRSV). The segment at 614–678 (SIGANRSESV…TSVGKDDSLD (65 aa)) is disordered.

It belongs to the VgrG protein family.

The protein resides in the secreted. Functionally, part of the H1 type VI secretion system (H1-T6SS) specialized secretion system, which delivers several virulence factors in both prokaryotic and eukaryotic cells during infection. Allows the delivery of the Tse7 toxin to target cells where it exerts toxicity through its nuclease domain. This is Type VI secretion system spike protein VgrG1b from Pseudomonas aeruginosa (strain ATCC 15692 / DSM 22644 / CIP 104116 / JCM 14847 / LMG 12228 / 1C / PRS 101 / PAO1).